We begin with the raw amino-acid sequence, 417 residues long: Gamma-glutamyl phosphate reductase (417 aa).

It belongs to the gamma-glutamyl phosphate reductase family.

Its subcellular location is the cytoplasm. It carries out the reaction L-glutamate 5-semialdehyde + phosphate + NADP(+) = L-glutamyl 5-phosphate + NADPH + H(+). Its pathway is amino-acid biosynthesis; L-proline biosynthesis; L-glutamate 5-semialdehyde from L-glutamate: step 2/2. In terms of biological role, catalyzes the NADPH-dependent reduction of L-glutamate 5-phosphate into L-glutamate 5-semialdehyde and phosphate. The product spontaneously undergoes cyclization to form 1-pyrroline-5-carboxylate. The polypeptide is Gamma-glutamyl phosphate reductase (Haemophilus influenzae (strain PittGG)).